A 359-amino-acid chain; its full sequence is NAC transcription factor 47 (359 aa).

Residues 10-186 enclose the NAC domain; that stretch reads LPPGFRFHPT…DWVLCRIYKK (177 aa). Residues 112 to 192 mediate DNA binding; sequence IGIKKALVFY…IYKKSHASLS (81 aa). 2 disordered regions span residues 147–166 and 200–226; these read KRINSSRSGGSEVNNNFGDR and TSNQEHEENDNEPFVDRGTFLPNLQND. Residues 148–165 show a composition bias toward polar residues; sequence RINSSRSGGSEVNNNFGD.

It localises to the nucleus. Transcription factor that binds to the promoter of ACO5, an ACC oxidase involved in ethylene biosynthesis. Mediates waterlogging-induced hyponastic leaf movement, and cell expansion in abaxial cells of the basal petiole region, by directly regulating the expression of ACO5. Required for normal seed development and morphology. In Arabidopsis thaliana (Mouse-ear cress), this protein is NAC transcription factor 47.